Reading from the N-terminus, the 249-residue chain is 1-(5-phosphoribosyl)-5-[(5-phosphoribosylamino)methylideneamino] imidazole-4-carboxamide isomerase (249 aa).

Asp11 functions as the Proton acceptor in the catalytic mechanism. Asp132 acts as the Proton donor in catalysis.

It belongs to the HisA/HisF family.

The protein resides in the cytoplasm. It carries out the reaction 1-(5-phospho-beta-D-ribosyl)-5-[(5-phospho-beta-D-ribosylamino)methylideneamino]imidazole-4-carboxamide = 5-[(5-phospho-1-deoxy-D-ribulos-1-ylimino)methylamino]-1-(5-phospho-beta-D-ribosyl)imidazole-4-carboxamide. The protein operates within amino-acid biosynthesis; L-histidine biosynthesis; L-histidine from 5-phospho-alpha-D-ribose 1-diphosphate: step 4/9. The sequence is that of 1-(5-phosphoribosyl)-5-[(5-phosphoribosylamino)methylideneamino] imidazole-4-carboxamide isomerase from Nitrobacter winogradskyi (strain ATCC 25391 / DSM 10237 / CIP 104748 / NCIMB 11846 / Nb-255).